A 544-amino-acid polypeptide reads, in one-letter code: Protein nucleotidyltransferase YdiU (544 aa).

8 residues coordinate ATP: Gly-133, Gly-135, Arg-136, Lys-155, Asp-167, Gly-168, Arg-218, and Arg-225. Asp-294 serves as the catalytic Proton acceptor. Positions 295 and 304 each coordinate Mg(2+). Asp-304 serves as a coordination point for ATP.

The protein belongs to the SELO family. The cofactor is Mg(2+). Requires Mn(2+) as cofactor.

The enzyme catalyses L-seryl-[protein] + ATP = 3-O-(5'-adenylyl)-L-seryl-[protein] + diphosphate. The catalysed reaction is L-threonyl-[protein] + ATP = 3-O-(5'-adenylyl)-L-threonyl-[protein] + diphosphate. It carries out the reaction L-tyrosyl-[protein] + ATP = O-(5'-adenylyl)-L-tyrosyl-[protein] + diphosphate. It catalyses the reaction L-histidyl-[protein] + UTP = N(tele)-(5'-uridylyl)-L-histidyl-[protein] + diphosphate. The enzyme catalyses L-seryl-[protein] + UTP = O-(5'-uridylyl)-L-seryl-[protein] + diphosphate. The catalysed reaction is L-tyrosyl-[protein] + UTP = O-(5'-uridylyl)-L-tyrosyl-[protein] + diphosphate. Its function is as follows. Nucleotidyltransferase involved in the post-translational modification of proteins. It can catalyze the addition of adenosine monophosphate (AMP) or uridine monophosphate (UMP) to a protein, resulting in modifications known as AMPylation and UMPylation. This Cupriavidus metallidurans (strain ATCC 43123 / DSM 2839 / NBRC 102507 / CH34) (Ralstonia metallidurans) protein is Protein nucleotidyltransferase YdiU.